The sequence spans 195 residues: Imidazoleglycerol-phosphate dehydratase (195 aa).

The protein belongs to the imidazoleglycerol-phosphate dehydratase family.

It localises to the cytoplasm. It catalyses the reaction D-erythro-1-(imidazol-4-yl)glycerol 3-phosphate = 3-(imidazol-4-yl)-2-oxopropyl phosphate + H2O. It functions in the pathway amino-acid biosynthesis; L-histidine biosynthesis; L-histidine from 5-phospho-alpha-D-ribose 1-diphosphate: step 6/9. This chain is Imidazoleglycerol-phosphate dehydratase, found in Beijerinckia indica subsp. indica (strain ATCC 9039 / DSM 1715 / NCIMB 8712).